Reading from the N-terminus, the 102-residue chain is MAGQKIRIRLKAYDHEVIDSSARKIVETVTRTGARVAGPVPLPTEKNVYCVIRSPHKDKDSREHFEMRTHKRLIDIIDPTPRTVDSLMRLDLPAGVDIEIKL.

The protein belongs to the universal ribosomal protein uS10 family. Part of the 30S ribosomal subunit.

Involved in the binding of tRNA to the ribosomes. This Acidothermus cellulolyticus (strain ATCC 43068 / DSM 8971 / 11B) protein is Small ribosomal subunit protein uS10.